Reading from the N-terminus, the 280-residue chain is Feruloyl esterase 1 (280 aa).

An N-terminal signal peptide occupies residues 1-20; sequence MKAFATRALAFSVAAGQALA. Cystine bridges form between Cys-49–Cys-278, Cys-111–Cys-114, and Cys-247–Cys-254. Asn-99 is a glycosylation site (N-linked (GlcNAc...) asparagine). Ser-153 functions as the Nucleophile in the catalytic mechanism. The active-site Charge relay system is the Asp-214. Residue His-267 is the Charge relay system of the active site.

Belongs to the AB hydrolase superfamily. FaeA family. In terms of processing, glycosylated.

It is found in the secreted. The enzyme catalyses feruloyl-polysaccharide + H2O = ferulate + polysaccharide.. Its activity is regulated as follows. Metal or basic ions Mn(2+), Ni(+), Mg(2+), and NH(4)(+) decrease the activity by 4.4% to 14.1%. The enzymatic activity is inhibited by Zn(2+) at a low concentration (1 mM) but not a high concentration (5 mM). Loses about a quarter of activity by the addition of 1 mM of Cu(2+) or Fe(3+) and activity is completely suppressed when the concentration was up to 5 mM. Low concentrations (0.25 and 0.5 M) of NaCl improve the activity by 5.6 % or 8.3%, respectively. In terms of biological role, involved in degradation of plant cell walls. Hydrolyzes the feruloyl-arabinose ester bond in arabinoxylans, and the feruloyl-galactose ester bond in pectin. In Penicillium parvum (Eupenicillium parvum), this protein is Feruloyl esterase 1.